A 125-amino-acid chain; its full sequence is Small ribosomal subunit protein uS13 (125 aa).

Residues 91–125 (HRRGLPARGQRTRTNARTRKGKRKTVAGKKKAGKK) form a disordered region.

This sequence belongs to the universal ribosomal protein uS13 family. Part of the 30S ribosomal subunit. Forms a loose heterodimer with protein S19. Forms two bridges to the 50S subunit in the 70S ribosome.

Located at the top of the head of the 30S subunit, it contacts several helices of the 16S rRNA. In the 70S ribosome it contacts the 23S rRNA (bridge B1a) and protein L5 of the 50S subunit (bridge B1b), connecting the 2 subunits; these bridges are implicated in subunit movement. Contacts the tRNAs in the A and P-sites. This is Small ribosomal subunit protein uS13 from Chloroherpeton thalassium (strain ATCC 35110 / GB-78).